The chain runs to 53 residues: UPF0391 membrane protein YPDSF_3201 (53 aa).

Helical transmembrane passes span 4–24 and 27–47; these read WGII…GGLA and AAWA…ISLF.

This sequence belongs to the UPF0391 family.

The protein resides in the cell membrane. The sequence is that of UPF0391 membrane protein YPDSF_3201 from Yersinia pestis (strain Pestoides F).